A 212-amino-acid polypeptide reads, in one-letter code: Pyridoxine/pyridoxamine 5'-phosphate oxidase (212 aa).

Residues 8–11 (RREY) and Lys66 each bind substrate. FMN-binding positions include 61–66 (RIVLLK), 76–77 (FT), Arg82, Lys83, and Gln105. Tyr123, Arg127, and Ser131 together coordinate substrate. FMN is bound by residues 140 to 141 (QS) and Trp185. Substrate is bound at residue 191-193 (RLH). FMN is bound at residue Arg195.

It belongs to the pyridoxamine 5'-phosphate oxidase family. Homodimer. FMN serves as cofactor.

It catalyses the reaction pyridoxamine 5'-phosphate + O2 + H2O = pyridoxal 5'-phosphate + H2O2 + NH4(+). The enzyme catalyses pyridoxine 5'-phosphate + O2 = pyridoxal 5'-phosphate + H2O2. The protein operates within cofactor metabolism; pyridoxal 5'-phosphate salvage; pyridoxal 5'-phosphate from pyridoxamine 5'-phosphate: step 1/1. It participates in cofactor metabolism; pyridoxal 5'-phosphate salvage; pyridoxal 5'-phosphate from pyridoxine 5'-phosphate: step 1/1. Functionally, catalyzes the oxidation of either pyridoxine 5'-phosphate (PNP) or pyridoxamine 5'-phosphate (PMP) into pyridoxal 5'-phosphate (PLP). The sequence is that of Pyridoxine/pyridoxamine 5'-phosphate oxidase from Shewanella sp. (strain MR-4).